The primary structure comprises 159 residues: NAD(P)H-quinone oxidoreductase subunit I, chloroplastic (159 aa).

4Fe-4S ferredoxin-type domains are found at residues 55–84 (GRIH…VDWN) and 95–124 (KNYS…MTEE). The [4Fe-4S] cluster site is built by Cys-64, Cys-67, Cys-70, Cys-74, Cys-104, Cys-107, Cys-110, and Cys-114.

The protein belongs to the complex I 23 kDa subunit family. In terms of assembly, NDH is composed of at least 16 different subunits, 5 of which are encoded in the nucleus. The cofactor is [4Fe-4S] cluster.

Its subcellular location is the plastid. The protein resides in the chloroplast thylakoid membrane. It carries out the reaction a plastoquinone + NADH + (n+1) H(+)(in) = a plastoquinol + NAD(+) + n H(+)(out). The enzyme catalyses a plastoquinone + NADPH + (n+1) H(+)(in) = a plastoquinol + NADP(+) + n H(+)(out). Functionally, NDH shuttles electrons from NAD(P)H:plastoquinone, via FMN and iron-sulfur (Fe-S) centers, to quinones in the photosynthetic chain and possibly in a chloroplast respiratory chain. The immediate electron acceptor for the enzyme in this species is believed to be plastoquinone. Couples the redox reaction to proton translocation, and thus conserves the redox energy in a proton gradient. The chain is NAD(P)H-quinone oxidoreductase subunit I, chloroplastic from Chara vulgaris (Common stonewort).